The primary structure comprises 523 residues: GMP synthase [glutamine-hydrolyzing] (523 aa).

The Glutamine amidotransferase type-1 domain maps to 8–205 (KILILDFGSQ…VVNICGCETK (198 aa)). The active-site Nucleophile is Cys-85. Active-site residues include His-179 and Glu-181. In terms of domain architecture, GMPS ATP-PPase spans 206–398 (WTAENIIEDA…LGLPAEMINR (193 aa)). 233–239 (SGGVDSS) is a binding site for ATP.

In terms of assembly, homodimer.

It carries out the reaction XMP + L-glutamine + ATP + H2O = GMP + L-glutamate + AMP + diphosphate + 2 H(+). Its pathway is purine metabolism; GMP biosynthesis; GMP from XMP (L-Gln route): step 1/1. Its function is as follows. Catalyzes the synthesis of GMP from XMP. In Haemophilus influenzae (strain PittEE), this protein is GMP synthase [glutamine-hydrolyzing].